The chain runs to 689 residues: Glycine--tRNA ligase beta subunit (689 aa).

The protein belongs to the class-II aminoacyl-tRNA synthetase family. In terms of assembly, tetramer of two alpha and two beta subunits.

It localises to the cytoplasm. The catalysed reaction is tRNA(Gly) + glycine + ATP = glycyl-tRNA(Gly) + AMP + diphosphate. The sequence is that of Glycine--tRNA ligase beta subunit from Mannheimia succiniciproducens (strain KCTC 0769BP / MBEL55E).